Reading from the N-terminus, the 456-residue chain is Chitobiosyldiphosphodolichol beta-mannosyltransferase (456 aa).

At 1–22 the chain is on the lumenal side; the sequence is MGEIIKYKGFDHVWQYSGPWLY. The helical transmembrane segment at 23 to 43 threads the bilayer; that stretch reads CLIGIYISLPVLAYHILPWIF. Residues 44–103 lie on the Cytoplasmic side of the membrane; the sequence is HKNRSNKRKTISIFVLGDLGHSPRMCYHASSFSKLDYYVNLCGYVETEPSHQIVDDVNID. Positions 104–124 form an intramembrane region, helical; that stretch reads IIPIEAIKNTNNLPYIMFAIL. The Cytoplasmic segment spans residues 125–456; that stretch reads KVVRQCGKIW…TFSSIFENKS (332 aa).

This sequence belongs to the glycosyltransferase group 1 family.

The protein localises to the endoplasmic reticulum membrane. The enzyme catalyses an N,N'-diacetylchitobiosyl-diphospho-di-trans,poly-cis-dolichol + GDP-alpha-D-mannose = a beta-D-Man-(1-&gt;4)-beta-D-GlcNAc-(1-&gt;4)-alpha-D-GlcNAc-diphospho-di-trans,poly-cis-dolichol + GDP + H(+). It participates in protein modification; protein glycosylation. In terms of biological role, participates in the formation of the lipid-linked precursor oligosaccharide for N-glycosylation. Involved in assembling the dolichol-pyrophosphate-GlcNAc(2)-Man(5) intermediate on the cytoplasmic surface of the ER. The sequence is that of Chitobiosyldiphosphodolichol beta-mannosyltransferase (ALG1) from Candida albicans (strain SC5314 / ATCC MYA-2876) (Yeast).